The primary structure comprises 252 residues: Probable transcriptional regulatory protein TW504 (252 aa).

This sequence belongs to the TACO1 family.

The protein localises to the cytoplasm. This chain is Probable transcriptional regulatory protein TW504, found in Tropheryma whipplei (strain TW08/27) (Whipple's bacillus).